The sequence spans 316 residues: N-acetyl-gamma-glutamyl-phosphate reductase (316 aa).

The active site involves cysteine 136.

Belongs to the NAGSA dehydrogenase family. Type 1 subfamily.

It localises to the cytoplasm. The enzyme catalyses N-acetyl-L-glutamate 5-semialdehyde + phosphate + NADP(+) = N-acetyl-L-glutamyl 5-phosphate + NADPH + H(+). It participates in amino-acid biosynthesis; L-arginine biosynthesis; N(2)-acetyl-L-ornithine from L-glutamate: step 3/4. In terms of biological role, catalyzes the NADPH-dependent reduction of N-acetyl-5-glutamyl phosphate to yield N-acetyl-L-glutamate 5-semialdehyde. The protein is N-acetyl-gamma-glutamyl-phosphate reductase of Xanthomonas axonopodis pv. citri (strain 306).